The primary structure comprises 209 residues: Ancillary SecYEG translocon subunit (209 aa).

The Cytoplasmic segment spans residues 1 to 23 (MAAHLEEQQELDNFKYFWKTTGK). Residues 24–42 (WLFALLILAALGYLGYTVY) form a helical membrane-spanning segment. Topologically, residues 43–209 (QNRAASQNQE…LLQMKLDSLK (167 aa)) are periplasmic. The TPR repeat unit spans residues 161-194 (PLLMETKGDVYAAQEKSQEALKNYGQALEKMPQD).

Belongs to the YfgM family. As to quaternary structure, interacts with the SecYEG translocon. Forms a complex with PpiD.

The protein localises to the cell inner membrane. Functionally, may mediate protein transfer from the SecYEG translocon to the periplasmic chaperone network via its periplasmic C-terminal region. This Neisseria gonorrhoeae (strain ATCC 700825 / FA 1090) protein is Ancillary SecYEG translocon subunit.